Consider the following 520-residue polypeptide: Putative thymidine phosphorylase 1 (520 aa).

Belongs to the thymidine/pyrimidine-nucleoside phosphorylase family. Type 2 subfamily.

The enzyme catalyses thymidine + phosphate = 2-deoxy-alpha-D-ribose 1-phosphate + thymine. This chain is Putative thymidine phosphorylase 1, found in Cupriavidus necator (strain ATCC 17699 / DSM 428 / KCTC 22496 / NCIMB 10442 / H16 / Stanier 337) (Ralstonia eutropha).